Here is a 434-residue protein sequence, read N- to C-terminus: Nicotinate phosphoribosyltransferase (434 aa).

Phosphohistidine; by autocatalysis is present on histidine 242.

It belongs to the NAPRTase family. Transiently phosphorylated on a His residue during the reaction cycle. Phosphorylation strongly increases the affinity for substrates and increases the rate of nicotinate D-ribonucleotide production. Dephosphorylation regenerates the low-affinity form of the enzyme, leading to product release.

The enzyme catalyses nicotinate + 5-phospho-alpha-D-ribose 1-diphosphate + ATP + H2O = nicotinate beta-D-ribonucleotide + ADP + phosphate + diphosphate. The protein operates within cofactor biosynthesis; NAD(+) biosynthesis; nicotinate D-ribonucleotide from nicotinate: step 1/1. Catalyzes the synthesis of beta-nicotinate D-ribonucleotide from nicotinate and 5-phospho-D-ribose 1-phosphate at the expense of ATP. This chain is Nicotinate phosphoribosyltransferase, found in Brucella melitensis biotype 1 (strain ATCC 23456 / CCUG 17765 / NCTC 10094 / 16M).